Here is a 387-residue protein sequence, read N- to C-terminus: Major outer membrane porin (387 aa).

Positions 1 to 22 (MKKLLKSVLAFAVLGSASSLHA) are cleaved as a signal peptide.

This sequence belongs to the chlamydial porin (CP) (TC 1.B.2) family. Part of a disulfide cross-linked outer membrane complex (COMC) composed of the major outer membrane porin (MOMP), the small cysteine-rich protein (OmcA) and the large cysteine-rich periplasmic protein (OmcB).

The protein localises to the cell outer membrane. In elementary bodies (EBs, the infectious stage, which is able to survive outside the host cell) provides the structural integrity of the outer envelope through disulfide cross-links with the small cysteine-rich protein and the large cysteine-rich periplasmic protein. It has been described in publications as the Sarkosyl-insoluble COMC (Chlamydia outer membrane complex), and serves as the functional equivalent of peptidoglycan. Its function is as follows. Permits diffusion of specific solutes through the outer membrane. In Chlamydia muridarum (strain MoPn / Nigg), this protein is Major outer membrane porin (ompA).